The primary structure comprises 96 residues: uncharacterized protein (96 aa).

Its function is as follows. Essential for virus function. This is an uncharacterized protein from Saccharolobus solfataricus (Sulfolobus solfataricus).